The primary structure comprises 316 residues: Ribosomal RNA small subunit methyltransferase H (316 aa).

Residues 35–37, Asp55, Phe79, Asp101, and Gln108 each bind S-adenosyl-L-methionine; that span reads GGH.

Belongs to the methyltransferase superfamily. RsmH family.

It localises to the cytoplasm. It carries out the reaction cytidine(1402) in 16S rRNA + S-adenosyl-L-methionine = N(4)-methylcytidine(1402) in 16S rRNA + S-adenosyl-L-homocysteine + H(+). In terms of biological role, specifically methylates the N4 position of cytidine in position 1402 (C1402) of 16S rRNA. The protein is Ribosomal RNA small subunit methyltransferase H of Vibrio proteolyticus (Aeromonas proteolytica).